Here is a 419-residue protein sequence, read N- to C-terminus: Tyrosine--tRNA ligase (419 aa).

L-tyrosine is bound at residue Y42. Positions 47–56 match the 'HIGH' region motif; it reads ATAPSLHVGS. 2 residues coordinate L-tyrosine: Y179 and Q183. The short motif at 239 to 243 is the 'KMSKS' region element; that stretch reads KMGKT. K242 serves as a coordination point for ATP. The S4 RNA-binding domain maps to 353–418; it reads VVLAALFADA…GKKKIVLVKP (66 aa).

Belongs to the class-I aminoacyl-tRNA synthetase family. TyrS type 1 subfamily. In terms of assembly, homodimer.

The protein localises to the cytoplasm. It carries out the reaction tRNA(Tyr) + L-tyrosine + ATP = L-tyrosyl-tRNA(Tyr) + AMP + diphosphate + H(+). Functionally, catalyzes the attachment of tyrosine to tRNA(Tyr) in a two-step reaction: tyrosine is first activated by ATP to form Tyr-AMP and then transferred to the acceptor end of tRNA(Tyr). This chain is Tyrosine--tRNA ligase, found in Caulobacter vibrioides (strain ATCC 19089 / CIP 103742 / CB 15) (Caulobacter crescentus).